The primary structure comprises 37 residues: MVETLLSGIVLGLMPVTLAGLFTTAYLQYRRGDQLNL.

Residues Leu5–Ala25 form a helical membrane-spanning segment.

This sequence belongs to the PetG family. As to quaternary structure, the 4 large subunits of the cytochrome b6-f complex are cytochrome b6, subunit IV (17 kDa polypeptide, PetD), cytochrome f and the Rieske protein, while the 4 small subunits are PetG, PetL, PetM and PetN. The complex functions as a dimer.

It is found in the plastid. Its subcellular location is the chloroplast thylakoid membrane. Component of the cytochrome b6-f complex, which mediates electron transfer between photosystem II (PSII) and photosystem I (PSI), cyclic electron flow around PSI, and state transitions. PetG is required for either the stability or assembly of the cytochrome b6-f complex. The polypeptide is Cytochrome b6-f complex subunit 5 (Ostreococcus tauri).